The primary structure comprises 412 residues: DNA polymerase IV 2 (412 aa).

The UmuC domain maps to 7–192; the sequence is IFLVDMQSFY…LPVGSMFGVG (186 aa). Mg(2+) is bound by residues aspartate 11 and aspartate 107. The active site involves glutamate 108.

It belongs to the DNA polymerase type-Y family. As to quaternary structure, monomer. The cofactor is Mg(2+).

It localises to the cytoplasm. The catalysed reaction is DNA(n) + a 2'-deoxyribonucleoside 5'-triphosphate = DNA(n+1) + diphosphate. Its function is as follows. Poorly processive, error-prone DNA polymerase involved in untargeted mutagenesis. Copies undamaged DNA at stalled replication forks, which arise in vivo from mismatched or misaligned primer ends. These misaligned primers can be extended by PolIV. Exhibits no 3'-5' exonuclease (proofreading) activity. May be involved in translesion synthesis (TSL), in conjunction with the beta clamp from PolIII. The chain is DNA polymerase IV 2 (dinB2) from Bacillus subtilis (strain 168).